The following is a 523-amino-acid chain: Aldehyde oxidase GLOX (523 aa).

Positions 1–19 (MILDAAIVALADLPGTWEL) are cleaved as a signal peptide.

The protein resides in the secreted. Its subcellular location is the cell wall. The catalysed reaction is an aldehyde + O2 + H2O = a carboxylate + H2O2 + H(+). Catalyzes the oxidation of aldehydes to the corresponding carboxylate by coupling the reaction to the reduction of dioxygen to hydrogen peroxide. Substrates include glyoxal and other aldehydes. Involved in disease resistance against the grapevine powdery mildew E.necator. Is sufficient to confer disease resistance to E.necator. Can produce hydrogen peroxide in response to E.necator infection, and this may directly play a role in the defense mechanism during plant-pathogen interactions. This Vitis pseudoreticulata (Chinese wild grapevine) protein is Aldehyde oxidase GLOX.